Here is a 434-residue protein sequence, read N- to C-terminus: Maltoporin (434 aa).

Residues 1–25 (MKMKAKWLPIAAAVTAALASQAAFA) form the signal peptide.

The protein belongs to the porin LamB (TC 1.B.3) family. In terms of assembly, homotrimer formed of three 18-stranded antiparallel beta-barrels, containing three independent channels.

Its subcellular location is the cell outer membrane. The enzyme catalyses beta-maltose(in) = beta-maltose(out). In terms of biological role, involved in the transport of maltose and maltodextrins. The chain is Maltoporin from Aeromonas hydrophila.